Consider the following 396-residue polypeptide: Exodeoxyribonuclease 7 large subunit (396 aa).

It belongs to the XseA family. As to quaternary structure, heterooligomer composed of large and small subunits.

It localises to the cytoplasm. The enzyme catalyses Exonucleolytic cleavage in either 5'- to 3'- or 3'- to 5'-direction to yield nucleoside 5'-phosphates.. In terms of biological role, bidirectionally degrades single-stranded DNA into large acid-insoluble oligonucleotides, which are then degraded further into small acid-soluble oligonucleotides. The protein is Exodeoxyribonuclease 7 large subunit of Clostridium tetani (strain Massachusetts / E88).